Here is a 443-residue protein sequence, read N- to C-terminus: Porin D (443 aa).

An N-terminal signal peptide occupies residues 1–23; that stretch reads MKVMKWSAIALAVSAGSTQFAVA. Active-site residues include His179, Asp231, and Ser319.

The protein belongs to the outer membrane porin (Opr) (TC 1.B.25) family.

It localises to the cell outer membrane. In terms of biological role, porin with a specificity for basic amino acids. Involved in facilitated diffusion of carbapenem beta-lactam antibiotics, such as imipenem and meropenem. Also possesses serine protease activity. This chain is Porin D (oprD), found in Pseudomonas aeruginosa (strain ATCC 15692 / DSM 22644 / CIP 104116 / JCM 14847 / LMG 12228 / 1C / PRS 101 / PAO1).